Consider the following 496-residue polypeptide: COP9 signalosome complex subunit 3 (496 aa).

The PCI domain occupies Q243–F411. The segment at G468–R496 is disordered. Acidic residues predominate over residues G483–R496.

It belongs to the CSN3 family. In terms of assembly, component of the COP9 signalosome (CSN) complex.

It is found in the cytoplasm. The protein localises to the nucleus. Functionally, component of the COP9 signalosome (CSN) complex that acts as an regulator of the ubiquitin (Ubl) conjugation pathway by mediating the deneddylation of the cullin subunit of SCF-type E3 ubiquitin-protein ligase complexes. The CSN complex seems to link protein degradation to sexual development. This Emericella nidulans (strain FGSC A4 / ATCC 38163 / CBS 112.46 / NRRL 194 / M139) (Aspergillus nidulans) protein is COP9 signalosome complex subunit 3 (csnC).